The primary structure comprises 737 residues: Amino-acid acetyltransferase, mitochondrial (737 aa).

The N-terminal 47 residues, 1–47 (MSRSTVLGWCTQSCRLLQKHDHSFSFPTFNGSPPLKKRRFCDSAAPA), are a transit peptide targeting the mitochondrion. Residues 43–78 (SAAPAAPRPSIHRPSEYIPHSKSGGEAPQDLGHKAR) are disordered. In terms of domain architecture, N-acetyltransferase spans 558 to 727 (GEPALTLDDP…YEGVCRAIEP (170 aa)).

The protein belongs to the acetyltransferase family.

Its subcellular location is the mitochondrion. The enzyme catalyses L-glutamate + acetyl-CoA = N-acetyl-L-glutamate + CoA + H(+). It functions in the pathway amino-acid biosynthesis; L-arginine biosynthesis; N(2)-acetyl-L-ornithine from L-glutamate: step 1/4. N-acetylglutamate synthase involved in arginine biosynthesis. This Coccidioides immitis (strain RS) (Valley fever fungus) protein is Amino-acid acetyltransferase, mitochondrial (ARG2).